An 835-amino-acid chain; its full sequence is Leucine--tRNA ligase (835 aa).

The 'HIGH' region motif lies at 36-46; that stretch reads PYPSGKIHVGH. Positions 602–606 match the 'KMSKS' region motif; that stretch reads KMSKS. Lys605 lines the ATP pocket.

It belongs to the class-I aminoacyl-tRNA synthetase family.

It localises to the cytoplasm. It catalyses the reaction tRNA(Leu) + L-leucine + ATP = L-leucyl-tRNA(Leu) + AMP + diphosphate. This is Leucine--tRNA ligase from Rickettsia peacockii (strain Rustic).